The following is a 210-amino-acid chain: Probable septum site-determining protein MinC (210 aa).

The protein belongs to the MinC family. In terms of assembly, interacts with MinD and FtsZ.

Cell division inhibitor that blocks the formation of polar Z ring septums. Rapidly oscillates between the poles of the cell to destabilize FtsZ filaments that have formed before they mature into polar Z rings. Prevents FtsZ polymerization. The sequence is that of Probable septum site-determining protein MinC from Thermotoga sp. (strain RQ2).